A 347-amino-acid chain; its full sequence is N-acetyl-gamma-glutamyl-phosphate reductase (347 aa).

Cysteine 152 is a catalytic residue.

It belongs to the NAGSA dehydrogenase family. Type 1 subfamily.

The protein localises to the cytoplasm. It catalyses the reaction N-acetyl-L-glutamate 5-semialdehyde + phosphate + NADP(+) = N-acetyl-L-glutamyl 5-phosphate + NADPH + H(+). It functions in the pathway amino-acid biosynthesis; L-arginine biosynthesis; N(2)-acetyl-L-ornithine from L-glutamate: step 3/4. Catalyzes the NADPH-dependent reduction of N-acetyl-5-glutamyl phosphate to yield N-acetyl-L-glutamate 5-semialdehyde. The protein is N-acetyl-gamma-glutamyl-phosphate reductase of Neisseria gonorrhoeae (strain NCCP11945).